A 1478-amino-acid chain; its full sequence is DNA-directed RNA polymerase subunit beta' (1478 aa).

Mg(2+)-binding residues include D535, D537, and D539. Positions 1034, 1109, 1116, and 1119 each coordinate Zn(2+).

This sequence belongs to the RNA polymerase beta' chain family. In terms of assembly, the RNAP catalytic core consists of 2 alpha, 1 beta, 1 beta' and 1 omega subunit. When a sigma factor is associated with the core the holoenzyme is formed, which can initiate transcription. Mg(2+) is required as a cofactor. Zn(2+) serves as cofactor.

The enzyme catalyses RNA(n) + a ribonucleoside 5'-triphosphate = RNA(n+1) + diphosphate. DNA-dependent RNA polymerase catalyzes the transcription of DNA into RNA using the four ribonucleoside triphosphates as substrates. In Mycoplasmopsis agalactiae (strain NCTC 10123 / CIP 59.7 / PG2) (Mycoplasma agalactiae), this protein is DNA-directed RNA polymerase subunit beta'.